Here is a 224-residue protein sequence, read N- to C-terminus: Proteasome subunit beta (224 aa).

Positions 1–6 (MDVMKG) are cleaved as a propeptide — removed in mature form; by autocatalysis. Residue Thr7 is the Nucleophile of the active site.

The protein belongs to the peptidase T1B family. As to quaternary structure, the 20S proteasome core is composed of 14 alpha and 14 beta subunits that assemble into four stacked heptameric rings, resulting in a barrel-shaped structure. The two inner rings, each composed of seven catalytic beta subunits, are sandwiched by two outer rings, each composed of seven alpha subunits. The catalytic chamber with the active sites is on the inside of the barrel. Has a gated structure, the ends of the cylinder being occluded by the N-termini of the alpha-subunits. Is capped at one or both ends by the proteasome regulatory ATPase, PAN.

It localises to the cytoplasm. The catalysed reaction is Cleavage of peptide bonds with very broad specificity.. With respect to regulation, the formation of the proteasomal ATPase PAN-20S proteasome complex, via the docking of the C-termini of PAN into the intersubunit pockets in the alpha-rings, triggers opening of the gate for substrate entry. Interconversion between the open-gate and close-gate conformations leads to a dynamic regulation of the 20S proteasome proteolysis activity. Its function is as follows. Component of the proteasome core, a large protease complex with broad specificity involved in protein degradation. This is Proteasome subunit beta from Methanocaldococcus sp. (strain FS406-22).